We begin with the raw amino-acid sequence, 264 residues long: Teichoic acids export ATP-binding protein TagH (264 aa).

The ABC transporter domain maps to 24 to 243; that stretch reads IKDALIPKNK…YEAFLKTFKK (220 aa). 57–64 serves as a coordination point for ATP; it reads GINGSGKS.

This sequence belongs to the ABC transporter superfamily. Teichoic acids exporter (TC 3.A.1.104.1) family. As to quaternary structure, the complex is composed of two ATP-binding proteins (TagH) and two transmembrane proteins (TagG).

It localises to the cell membrane. The catalysed reaction is ATP + H2O + teichoic acidSide 1 = ADP + phosphate + teichoic acidSide 2.. In terms of biological role, part of the ABC transporter complex TagGH involved in teichoic acids export. Responsible for energy coupling to the transport system. The protein is Teichoic acids export ATP-binding protein TagH of Staphylococcus epidermidis (strain ATCC 35984 / DSM 28319 / BCRC 17069 / CCUG 31568 / BM 3577 / RP62A).